The chain runs to 370 residues: NADH-quinone oxidoreductase subunit D (370 aa).

Belongs to the complex I 49 kDa subunit family. In terms of assembly, NDH-1 is composed of 14 different subunits. Subunits NuoB, C, D, E, F, and G constitute the peripheral sector of the complex.

It localises to the cell membrane. It catalyses the reaction a quinone + NADH + 5 H(+)(in) = a quinol + NAD(+) + 4 H(+)(out). Functionally, NDH-1 shuttles electrons from NADH, via FMN and iron-sulfur (Fe-S) centers, to quinones in the respiratory chain. The immediate electron acceptor for the enzyme in this species is believed to be a menaquinone. Couples the redox reaction to proton translocation (for every two electrons transferred, four hydrogen ions are translocated across the cytoplasmic membrane), and thus conserves the redox energy in a proton gradient. The protein is NADH-quinone oxidoreductase subunit D of Clostridium beijerinckii (strain ATCC 51743 / NCIMB 8052) (Clostridium acetobutylicum).